We begin with the raw amino-acid sequence, 775 residues long: E3 ubiquitin-protein ligase ICP0 (775 aa).

The interval 1-112 (MEPRPGASTR…PPREDGGSDE (112 aa)) is disordered. Basic and acidic residues-rich tracts occupy residues 10–21 (RRPEGRPQREPA) and 45–57 (VGGR…HDDD). A compositionally biased stretch (acidic residues) spans 58–69 (SASEADSTDTEL). Thr67 bears the Phosphothreonine; by host; by CK1 mark. The segment at 116–157 (CAVCTDEIAPHLRCDTFPCMHRFCIPCMKTWMQLRNTCPLCN) adopts an RING-type zinc-finger fold. The tract at residues 221–636 (RALSPTHPEP…HAETSGAVPA (416 aa)) is disordered. Acidic residues predominate over residues 231-243 (TTDEDDDDLDDAD). Residues 258-284 (RRGAAAPPVTGGASHAAPQPAAARTAP) show a composition bias toward low complexity. Residues 293–302 (GSSNTNTTTN) are compositionally biased toward polar residues. A compositionally biased stretch (low complexity) spans 310-321 (RQSRAAAPRGAS). Positions 322-331 (GPSGGVGVGV) are enriched in gly residues. Pro residues predominate over residues 369-390 (PASPHRPPAAPMPGSAPRPGPP). Over residues 391-409 (ASAAASGPARPRAAVAPCV) the composition is skewed to low complexity. A compositionally biased stretch (pro residues) spans 410-421 (RAPPPGPGPRAP). The span at 422 to 431 (APGAEPAARP) shows a compositional bias: low complexity. Polar residues predominate over residues 439 to 453 (QSHSSLAQAANQEQS). Positions 464–476 (GSGGPGVEGGHGP) are enriched in gly residues. A compositionally biased stretch (low complexity) spans 477 to 493 (SRGAAPSGAAPLPSAAS). Residues 509-519 (GQENPSPQSTR) are compositionally biased toward polar residues. Residues 539-549 (GPGGRGQGGPG) are compositionally biased toward gly residues. Residues 550–592 (TPLTSSAASASSSSASSSSAPTPAGAASSAAGAASSSASASSG) are compositionally biased toward low complexity. Residues 617 to 626 (GPRKCARKTR) show a composition bias toward basic residues.

The protein belongs to the simplexviruses ICp0 family. As to quaternary structure, interacts directly with human RCOR1/CoREST protein, leading to the disruption of the human BHC corepressor complex. Interacts with human CENPA, leading to its degradation. Interacts with human USP7; this interaction modulates ICP0 stability. Interacts with human CDC34. Interacts (when phosphorylated) with human RNF8 (via FHA domain). Interacts with human TRIM27. Interacts with human ZBP1. Interacts with host MORC3; this interaction promotes the degradation of host MORC3. Post-translationally, phosphorylated at Thr-67, leading to promote interaction with host RNF8. Phosphorylated by host CHEK2; leading to increased SUMO-targeted ubiquitin ligase activity of ICP0. In terms of processing, auto-ubiquitinated. Deubiquitinated by host USP7; leading to stabilize it.

The protein localises to the host cytoplasm. It is found in the host nucleus. The enzyme catalyses S-ubiquitinyl-[E2 ubiquitin-conjugating enzyme]-L-cysteine + [acceptor protein]-L-lysine = [E2 ubiquitin-conjugating enzyme]-L-cysteine + N(6)-ubiquitinyl-[acceptor protein]-L-lysine.. SUMO-targeted ubiquitin ligase that plays an essential role in nuclear antiviral defense evasion triggered by dsDNA viruses. Acts during the initial stages of lytic infection and the reactivation of latent viral genome. Prevents the antiviral effect of nuclear bodies by degrading host PML, SP100 and MORC3. Prevents antiviral response to viral DNA induced by IFI16 by degrading it. Additionally, inhibits host IRF3 nuclear signaling to prevent interferon production by the infected cells. Interestingly, the E3 ubiquitin ligase activity associated with the RING finger domain does not seem to be directly required to inhibit the activation of IRF3 but instead plays a critical role in modulating the cellular localization of ICP0. Upon reactivation of latent genome, suppresses the silencing of viral DNA by dissociating either HDAC1 or HDAC2 from the HDAC-RCOR1-REST-KDM1A complex localized at the ND10 structures and causes their dispersal. Two cellular histone ubiquitin ligases RNF8 and RNF168 are also targeted by ICP0 for degradation, leading to a loss of ubiquitinated forms of H2A, a relief of transcriptional repression, and the activation of latent viral genomes. Enhances the localization of host CCND3 to ND10 bodies that serve as precursors of replication compartments to enable efficient viral replication. Like many RING-finger E3 ubiquitin ligases, ICP0 can induce its own ubiquitination, an activity that promotes its instability due to its targeting to the 26S proteasome for degradation. ICP0 restricts this process by recruiting the cellular ubiquitin-specific protease USP7 that cleaves the anchored ubiquitin chains from ICP0, thereby promoting its stabilization. The polypeptide is E3 ubiquitin-protein ligase ICP0 (ICP0) (Homo sapiens (Human)).